A 358-amino-acid polypeptide reads, in one-letter code: UDP-N-acetylglucosamine--N-acetylmuramyl-(pentapeptide) pyrophosphoryl-undecaprenol N-acetylglucosamine transferase (358 aa).

Residues Thr11–Gly13, Asn120, Arg161, Ser188, and Gln282 contribute to the UDP-N-acetyl-alpha-D-glucosamine site.

It belongs to the glycosyltransferase 28 family. MurG subfamily.

It localises to the cell inner membrane. It catalyses the reaction di-trans,octa-cis-undecaprenyl diphospho-N-acetyl-alpha-D-muramoyl-L-alanyl-D-glutamyl-meso-2,6-diaminopimeloyl-D-alanyl-D-alanine + UDP-N-acetyl-alpha-D-glucosamine = di-trans,octa-cis-undecaprenyl diphospho-[N-acetyl-alpha-D-glucosaminyl-(1-&gt;4)]-N-acetyl-alpha-D-muramoyl-L-alanyl-D-glutamyl-meso-2,6-diaminopimeloyl-D-alanyl-D-alanine + UDP + H(+). Its pathway is cell wall biogenesis; peptidoglycan biosynthesis. In terms of biological role, cell wall formation. Catalyzes the transfer of a GlcNAc subunit on undecaprenyl-pyrophosphoryl-MurNAc-pentapeptide (lipid intermediate I) to form undecaprenyl-pyrophosphoryl-MurNAc-(pentapeptide)GlcNAc (lipid intermediate II). In Synechococcus sp. (strain CC9311), this protein is UDP-N-acetylglucosamine--N-acetylmuramyl-(pentapeptide) pyrophosphoryl-undecaprenol N-acetylglucosamine transferase.